We begin with the raw amino-acid sequence, 438 residues long: GTPase Der (438 aa).

2 consecutive EngA-type G domains span residues 4 to 168 (PVVA…DDNS) and 177 to 352 (TKVC…NNYS). GTP-binding positions include 10 to 17 (GRANVGKS), 57 to 61 (DTGGL), 120 to 123 (NKID), 183 to 190 (GKPNVGKS), 230 to 234 (DTAGL), and 295 to 298 (NKWD). The KH-like domain occupies 353–437 (MRISTGVLND…PLQFEFKTRG (85 aa)).

It belongs to the TRAFAC class TrmE-Era-EngA-EngB-Septin-like GTPase superfamily. EngA (Der) GTPase family. In terms of assembly, associates with the 50S ribosomal subunit.

GTPase that plays an essential role in the late steps of ribosome biogenesis. This chain is GTPase Der, found in Finegoldia magna (strain ATCC 29328 / DSM 20472 / WAL 2508) (Peptostreptococcus magnus).